Reading from the N-terminus, the 333-residue chain is DNA primase small subunit PriS (333 aa).

Active-site residues include Asp-96, Asp-98, and Asp-237.

This sequence belongs to the eukaryotic-type primase small subunit family. As to quaternary structure, heterodimer of a small subunit (PriS) and a large subunit (PriL). Requires Mg(2+) as cofactor. It depends on Mn(2+) as a cofactor.

Its function is as follows. Catalytic subunit of DNA primase, an RNA polymerase that catalyzes the synthesis of short RNA molecules used as primers for DNA polymerase during DNA replication. The small subunit contains the primase catalytic core and has DNA synthesis activity on its own. Binding to the large subunit stabilizes and modulates the activity, increasing the rate of DNA synthesis while decreasing the length of the DNA fragments, and conferring RNA synthesis capability. The DNA polymerase activity may enable DNA primase to also catalyze primer extension after primer synthesis. May also play a role in DNA repair. The protein is DNA primase small subunit PriS of Thermoplasma volcanium (strain ATCC 51530 / DSM 4299 / JCM 9571 / NBRC 15438 / GSS1).